The sequence spans 207 residues: Cytochrome c oxidase subunit 3 (207 aa).

5 helical membrane passes run 30-50, 67-87, 101-121, 144-164, and 186-206; these read FWLFLGGETVLFASLFATFLA, VTLVFIATMLLLTSSLTSVYA, LWLGITILLGAGFLGLEIYEF, LVGTHGAHVAFGLMWISTLMI, and WHFIDVVWVFIFTVVYLMGMV.

This sequence belongs to the cytochrome c oxidase subunit 3 family.

Its subcellular location is the cell membrane. The catalysed reaction is 4 Fe(II)-[cytochrome c] + O2 + 8 H(+)(in) = 4 Fe(III)-[cytochrome c] + 2 H2O + 4 H(+)(out). This chain is Cytochrome c oxidase subunit 3 (ctaE), found in Bacillus subtilis (strain 168).